Consider the following 119-residue polypeptide: Ribonuclease P protein component (119 aa).

It belongs to the RnpA family. Consists of a catalytic RNA component (M1 or rnpB) and a protein subunit.

The enzyme catalyses Endonucleolytic cleavage of RNA, removing 5'-extranucleotides from tRNA precursor.. In terms of biological role, RNaseP catalyzes the removal of the 5'-leader sequence from pre-tRNA to produce the mature 5'-terminus. It can also cleave other RNA substrates such as 4.5S RNA. The protein component plays an auxiliary but essential role in vivo by binding to the 5'-leader sequence and broadening the substrate specificity of the ribozyme. The sequence is that of Ribonuclease P protein component from Pectobacterium atrosepticum (strain SCRI 1043 / ATCC BAA-672) (Erwinia carotovora subsp. atroseptica).